Reading from the N-terminus, the 64-residue chain is Beta-insect depressant toxin BmKIT4 (64 aa).

In terms of domain architecture, LCN-type CS-alpha/beta spans 1-61 (DGYIRGSNGC…TWKSESNTCG (61 aa)). Intrachain disulfides connect Cys-10-Cys-60, Cys-14-Cys-35, Cys-21-Cys-42, and Cys-25-Cys-44. The residue at position 60 (Cys-60) is a Cysteine amide.

This sequence belongs to the long (4 C-C) scorpion toxin superfamily. Sodium channel inhibitor family. Beta subfamily. As to expression, expressed by the venom gland.

The protein localises to the secreted. Its function is as follows. Depressant insect beta-toxins cause a transient contraction paralysis followed by a slow flaccid paralysis. They bind voltage-independently at site-4 of sodium channels (Nav) and shift the voltage of activation toward more negative potentials thereby affecting sodium channel activation and promoting spontaneous and repetitive firing. This toxin is active only on insects. This is Beta-insect depressant toxin BmKIT4 from Olivierus martensii (Manchurian scorpion).